A 402-amino-acid chain; its full sequence is tRNA(Met) cytidine acetate ligase (402 aa).

ATP-binding positions include isoleucine 7–histidine 20, glycine 102, asparagine 171, and arginine 196.

Belongs to the TmcAL family.

The protein localises to the cytoplasm. It catalyses the reaction cytidine(34) in elongator tRNA(Met) + acetate + ATP = N(4)-acetylcytidine(34) in elongator tRNA(Met) + AMP + diphosphate. Catalyzes the formation of N(4)-acetylcytidine (ac(4)C) at the wobble position of elongator tRNA(Met), using acetate and ATP as substrates. First activates an acetate ion to form acetyladenylate (Ac-AMP) and then transfers the acetyl group to tRNA to form ac(4)C34. The protein is tRNA(Met) cytidine acetate ligase of Clostridium perfringens (strain SM101 / Type A).